We begin with the raw amino-acid sequence, 343 residues long: Holliday junction branch migration complex subunit RuvB (343 aa).

Positions 1 to 20 (MEEMASRMISGDPELGEPFQ) are disordered. Residues 1–185 (MEEMASRMIS…FGILARMQFY (185 aa)) are large ATPase domain (RuvB-L). Residues leucine 24, arginine 25, glycine 66, lysine 69, threonine 70, threonine 71, 132-134 (EDF), arginine 175, tyrosine 185, and arginine 222 each bind ATP. Mg(2+) is bound at residue threonine 70. The segment at 186–256 (EPDELQQIVT…LADRALLALE (71 aa)) is small ATPAse domain (RuvB-S). Positions 259–343 (RNGLDNMDHR…PRPVQQGTLL (85 aa)) are head domain (RuvB-H). Positions 295, 314, and 319 each coordinate DNA.

It belongs to the RuvB family. As to quaternary structure, homohexamer. Forms an RuvA(8)-RuvB(12)-Holliday junction (HJ) complex. HJ DNA is sandwiched between 2 RuvA tetramers; dsDNA enters through RuvA and exits via RuvB. An RuvB hexamer assembles on each DNA strand where it exits the tetramer. Each RuvB hexamer is contacted by two RuvA subunits (via domain III) on 2 adjacent RuvB subunits; this complex drives branch migration. In the full resolvosome a probable DNA-RuvA(4)-RuvB(12)-RuvC(2) complex forms which resolves the HJ.

The protein resides in the cytoplasm. The catalysed reaction is ATP + H2O = ADP + phosphate + H(+). In terms of biological role, the RuvA-RuvB-RuvC complex processes Holliday junction (HJ) DNA during genetic recombination and DNA repair, while the RuvA-RuvB complex plays an important role in the rescue of blocked DNA replication forks via replication fork reversal (RFR). RuvA specifically binds to HJ cruciform DNA, conferring on it an open structure. The RuvB hexamer acts as an ATP-dependent pump, pulling dsDNA into and through the RuvAB complex. RuvB forms 2 homohexamers on either side of HJ DNA bound by 1 or 2 RuvA tetramers; 4 subunits per hexamer contact DNA at a time. Coordinated motions by a converter formed by DNA-disengaged RuvB subunits stimulates ATP hydrolysis and nucleotide exchange. Immobilization of the converter enables RuvB to convert the ATP-contained energy into a lever motion, pulling 2 nucleotides of DNA out of the RuvA tetramer per ATP hydrolyzed, thus driving DNA branch migration. The RuvB motors rotate together with the DNA substrate, which together with the progressing nucleotide cycle form the mechanistic basis for DNA recombination by continuous HJ branch migration. Branch migration allows RuvC to scan DNA until it finds its consensus sequence, where it cleaves and resolves cruciform DNA. This chain is Holliday junction branch migration complex subunit RuvB, found in Magnetococcus marinus (strain ATCC BAA-1437 / JCM 17883 / MC-1).